We begin with the raw amino-acid sequence, 169 residues long: Peptidyl-prolyl cis-trans isomerase (169 aa).

The region spanning 5–168 is the PPIase cyclophilin-type domain; sequence FFDMTIGGQP…SEVKIAKCGQ (164 aa).

It belongs to the cyclophilin-type PPIase family.

It is found in the cytoplasm. It catalyses the reaction [protein]-peptidylproline (omega=180) = [protein]-peptidylproline (omega=0). Binds cyclosporin A (CsA). CsA mediates some of its effects via an inhibitory action on PPIase. Its function is as follows. PPIases accelerate the folding of proteins. It catalyzes the cis-trans isomerization of proline imidic peptide bonds in oligopeptides. The protein is Peptidyl-prolyl cis-trans isomerase of Unspecified eudicot DB-1992.